The primary structure comprises 203 residues: Ribosome hibernation promotion factor (203 aa).

Belongs to the HPF/YfiA ribosome-associated protein family. Long HPF subfamily. As to quaternary structure, interacts with 100S ribosomes.

It localises to the cytoplasm. Its function is as follows. Required for dimerization of active 70S ribosomes into 100S ribosomes in stationary phase; 100S ribosomes are translationally inactive and sometimes present during exponential growth. The chain is Ribosome hibernation promotion factor from Bradyrhizobium diazoefficiens (strain JCM 10833 / BCRC 13528 / IAM 13628 / NBRC 14792 / USDA 110).